Here is a 301-residue protein sequence, read N- to C-terminus: Rhodopsin (301 aa).

The Extracellular segment spans residues 1 to 18 (LHMIHLHWYQYPPMNPMM). Residues 19-43 (YPLLLIFMLFTGILCLAGNFVTIWV) form a helical membrane-spanning segment. At 44 to 55 (FMNTKSLRTPAN) the chain is on the cytoplasmic side. The chain crosses the membrane as a helical span at residues 56 to 78 (LLVVNLAMSDFLMMFTMFPPMMV). Residues 79 to 92 (TCYYHTWTLGPTFC) lie on the Extracellular side of the membrane. A disulfide bridge connects residues cysteine 92 and cysteine 169. Residues 93–115 (QVYGFLGNLCGCASIWTMVFITF) form a helical membrane-spanning segment. A 'Ionic lock' involved in activated form stabilization motif is present at residues 116–118 (DRY). The Cytoplasmic segment spans residues 116–134 (DRYNVIVKGVAGEPLSTKK). A helical membrane pass occupies residues 135 to 155 (ASLWILIVWVLSLAWCMAPFF). At 156–182 (GWNRYVPEGNLTGCGTDYLSEDILSRS) the chain is on the extracellular side. Residue asparagine 165 is glycosylated (N-linked (GlcNAc...) asparagine). A helical membrane pass occupies residues 183–204 (YLYIYSTWVYFLPLTITIYCYV). Over 205–245 (FIIKAVAAHEKGMRDQAKKMGIKSLRNEEAQKTSAECRLAK) the chain is Cytoplasmic. The helical transmembrane segment at 246 to 267 (IAMTTVALWFIAWTPYLLINWV) threads the bilayer. The Extracellular portion of the chain corresponds to 268-278 (GMFARSYLSPV). Residues 279 to 300 (YTIWGYVFAKANAVYNPIVYAI) form a helical membrane-spanning segment. Residue lysine 288 is modified to N6-(retinylidene)lysine.

This sequence belongs to the G-protein coupled receptor 1 family. Opsin subfamily. As to quaternary structure, homodimer. Interacts with GNAQ. Post-translationally, contains one covalently linked retinal chromophore.

It is found in the cell projection. Its subcellular location is the rhabdomere membrane. In terms of biological role, photoreceptor required for image-forming vision at low light intensity. Can use both retinal and 3-dehydroretinal as visual pigment. Light-induced isomerization of 11-cis to all-trans retinal triggers a conformational change that activates signaling via G-proteins. Signaling via GNAQ probably mediates the activation of phospholipase C. The sequence is that of Rhodopsin (RHO) from Procambarus milleri (Miami cave crayfish).